The primary structure comprises 110 residues: UPF0060 membrane protein Bamb_1160 (110 aa).

4 helical membrane passes run 9 to 29 (ALFA…WLVL), 34 to 54 (PVWL…LLTL), 66 to 86 (YGGV…GVAL), and 88 to 108 (RWDA…ALQP).

The protein belongs to the UPF0060 family.

The protein localises to the cell inner membrane. The polypeptide is UPF0060 membrane protein Bamb_1160 (Burkholderia ambifaria (strain ATCC BAA-244 / DSM 16087 / CCUG 44356 / LMG 19182 / AMMD) (Burkholderia cepacia (strain AMMD))).